Reading from the N-terminus, the 337-residue chain is Ribonucleoside-diphosphate reductase small chain (337 aa).

The Fe cation site is built by Asp85, Glu116, and His119. Residue Tyr123 is part of the active site. Fe cation is bound by residues Glu178, Glu212, and His215.

This sequence belongs to the ribonucleoside diphosphate reductase small chain family. Heterodimer of a large and a small subunit. The cofactor is Fe cation.

The catalysed reaction is a 2'-deoxyribonucleoside 5'-diphosphate + [thioredoxin]-disulfide + H2O = a ribonucleoside 5'-diphosphate + [thioredoxin]-dithiol. Its function is as follows. Provides the precursors necessary for DNA synthesis. Catalyzes the biosynthesis of deoxyribonucleotides from the corresponding ribonucleotides. This is Ribonucleoside-diphosphate reductase small chain (RNR2) from Trypanosoma brucei brucei.